A 133-amino-acid chain; its full sequence is Small heat shock protein ibp (133 aa).

Residues 11-126 (EQPLSENPNY…KPKKISINEE (116 aa)) form the sHSP domain.

Belongs to the small heat shock protein (HSP20) family.

The protein is Small heat shock protein ibp (ibp) of Wigglesworthia glossinidia brevipalpis.